The primary structure comprises 182 residues: ATP synthase subunit delta (182 aa).

This sequence belongs to the ATPase delta chain family. As to quaternary structure, F-type ATPases have 2 components, F(1) - the catalytic core - and F(0) - the membrane proton channel. F(1) has five subunits: alpha(3), beta(3), gamma(1), delta(1), epsilon(1). F(0) has three main subunits: a(1), b(2) and c(10-14). The alpha and beta chains form an alternating ring which encloses part of the gamma chain. F(1) is attached to F(0) by a central stalk formed by the gamma and epsilon chains, while a peripheral stalk is formed by the delta and b chains.

Its subcellular location is the cell inner membrane. Functionally, f(1)F(0) ATP synthase produces ATP from ADP in the presence of a proton or sodium gradient. F-type ATPases consist of two structural domains, F(1) containing the extramembraneous catalytic core and F(0) containing the membrane proton channel, linked together by a central stalk and a peripheral stalk. During catalysis, ATP synthesis in the catalytic domain of F(1) is coupled via a rotary mechanism of the central stalk subunits to proton translocation. This protein is part of the stalk that links CF(0) to CF(1). It either transmits conformational changes from CF(0) to CF(1) or is implicated in proton conduction. The chain is ATP synthase subunit delta from Pseudothermotoga lettingae (strain ATCC BAA-301 / DSM 14385 / NBRC 107922 / TMO) (Thermotoga lettingae).